A 454-amino-acid polypeptide reads, in one-letter code: Bifunctional protein GlmU (454 aa).

The pyrophosphorylase stretch occupies residues 1–227 (MKKLSVVILA…KMEVEGANNR (227 aa)). UDP-N-acetyl-alpha-D-glucosamine is bound by residues 9–12 (LAAG), K23, Q74, 79–80 (GT), 101–103 (YGD), G138, E152, N167, and N225. D103 serves as a coordination point for Mg(2+). Residue N225 coordinates Mg(2+). The tract at residues 228-248 (LQLAALERYYQHKQAERLLLE) is linker. Residues 249 to 454 (GVMLIDPARF…AGWQRPTKKK (206 aa)) form an N-acetyltransferase region. Positions 331 and 349 each coordinate UDP-N-acetyl-alpha-D-glucosamine. The active-site Proton acceptor is H361. 2 residues coordinate UDP-N-acetyl-alpha-D-glucosamine: Y364 and N375. Acetyl-CoA contacts are provided by residues A378, 384-385 (NY), S403, A421, and R438.

In the N-terminal section; belongs to the N-acetylglucosamine-1-phosphate uridyltransferase family. The protein in the C-terminal section; belongs to the transferase hexapeptide repeat family. In terms of assembly, homotrimer. It depends on Mg(2+) as a cofactor.

It localises to the cytoplasm. It carries out the reaction alpha-D-glucosamine 1-phosphate + acetyl-CoA = N-acetyl-alpha-D-glucosamine 1-phosphate + CoA + H(+). It catalyses the reaction N-acetyl-alpha-D-glucosamine 1-phosphate + UTP + H(+) = UDP-N-acetyl-alpha-D-glucosamine + diphosphate. It participates in nucleotide-sugar biosynthesis; UDP-N-acetyl-alpha-D-glucosamine biosynthesis; N-acetyl-alpha-D-glucosamine 1-phosphate from alpha-D-glucosamine 6-phosphate (route II): step 2/2. The protein operates within nucleotide-sugar biosynthesis; UDP-N-acetyl-alpha-D-glucosamine biosynthesis; UDP-N-acetyl-alpha-D-glucosamine from N-acetyl-alpha-D-glucosamine 1-phosphate: step 1/1. It functions in the pathway bacterial outer membrane biogenesis; LPS lipid A biosynthesis. Catalyzes the last two sequential reactions in the de novo biosynthetic pathway for UDP-N-acetylglucosamine (UDP-GlcNAc). The C-terminal domain catalyzes the transfer of acetyl group from acetyl coenzyme A to glucosamine-1-phosphate (GlcN-1-P) to produce N-acetylglucosamine-1-phosphate (GlcNAc-1-P), which is converted into UDP-GlcNAc by the transfer of uridine 5-monophosphate (from uridine 5-triphosphate), a reaction catalyzed by the N-terminal domain. The sequence is that of Bifunctional protein GlmU from Mannheimia succiniciproducens (strain KCTC 0769BP / MBEL55E).